Consider the following 170-residue polypeptide: tRNA-splicing endonuclease (170 aa).

Active-site residues include Tyr110, His116, and Lys147.

Belongs to the tRNA-intron endonuclease family. Archaeal short subfamily. In terms of assembly, homotetramer; although the tetramer contains four active sites, only two participate in the cleavage. Therefore, it should be considered as a dimer of dimers.

It carries out the reaction pretRNA = a 3'-half-tRNA molecule with a 5'-OH end + a 5'-half-tRNA molecule with a 2',3'-cyclic phosphate end + an intron with a 2',3'-cyclic phosphate and a 5'-hydroxyl terminus.. Endonuclease that removes tRNA introns. Cleaves pre-tRNA at the 5'- and 3'-splice sites to release the intron. The products are an intron and two tRNA half-molecules bearing 2',3' cyclic phosphate and 5'-OH termini. Recognizes a pseudosymmetric substrate in which 2 bulged loops of 3 bases are separated by a stem of 4 bp. The sequence is that of tRNA-splicing endonuclease from Pyrococcus horikoshii (strain ATCC 700860 / DSM 12428 / JCM 9974 / NBRC 100139 / OT-3).